Here is an 838-residue protein sequence, read N- to C-terminus: Protein translocase subunit SecA (838 aa).

ATP-binding positions include glutamine 85, 103–107 (GEGKT), and aspartate 493. Positions 823, 825, 834, and 835 each coordinate Zn(2+).

Belongs to the SecA family. In terms of assembly, monomer and homodimer. Part of the essential Sec protein translocation apparatus which comprises SecA, SecYEG and auxiliary proteins SecDF. Other proteins may also be involved. It depends on Zn(2+) as a cofactor.

Its subcellular location is the cell membrane. It is found in the cytoplasm. The enzyme catalyses ATP + H2O + cellular proteinSide 1 = ADP + phosphate + cellular proteinSide 2.. Functionally, part of the Sec protein translocase complex. Interacts with the SecYEG preprotein conducting channel. Has a central role in coupling the hydrolysis of ATP to the transfer of proteins into and across the cell membrane, serving as an ATP-driven molecular motor driving the stepwise translocation of polypeptide chains across the membrane. This is Protein translocase subunit SecA from Streptococcus gordonii (strain Challis / ATCC 35105 / BCRC 15272 / CH1 / DL1 / V288).